The chain runs to 467 residues: MKALCDRFVPQQCSSSSKSDTHDKSPLVSDSGPSDNKSKFTLWSNVFTSSSSVSQPYRESSTSGHKQVCTTRNGWTAFVKRVSMASGAIRRFQERVLGPNRTGLPSTTSDVWLLGVCYKISADENSGETDTGTVLAALQLDFSSKILMTYRKGFEPFRDTTYTSDVNWGCMIRSSQMLFAQALLFHRLGRAWTKKSELPEQEYLETLEPFGDSEPSAFSIHNLIIAGASYGLAAGSWVGPYAICRAWESLACKKRKQTDSKNQTLPMAVHIVSGSEDGERGGAPILCIEDATKSCLEFSKGQSEWTPIILLVPLVLGLDSVNPRYIPSLVATFTFPQSVGILGGKPGASTYIVGVQEDKGFYLDPHEVQQVVTVNKETPDVDTSSYHCNVLRYVPLESLDPSLALGFYCRDKDDFDDFCLRALKLAEESNGAPLFTVTQTHTAINQSNYGFADDDSEDEREDDWQML.

The interval 1–35 is disordered; that stretch reads MKALCDRFVPQQCSSSSKSDTHDKSPLVSDSGPSD. Cysteine 170 functions as the Nucleophile in the catalytic mechanism. Active-site residues include aspartate 364 and histidine 366. Residues 448–467 are disordered; the sequence is NYGFADDDSEDEREDDWQML. Acidic residues predominate over residues 452 to 467; that stretch reads ADDDSEDEREDDWQML.

It belongs to the peptidase C54 family. As to quaternary structure, interacts with ATG8. As to expression, constitutively expressed.

It is found in the cytoplasm. It catalyses the reaction [protein]-C-terminal L-amino acid-glycyl-phosphatidylethanolamide + H2O = [protein]-C-terminal L-amino acid-glycine + a 1,2-diacyl-sn-glycero-3-phosphoethanolamine. Functionally, cysteine protease that plays a key role in autophagy by mediating both proteolytic activation and delipidation of ATG8 family proteins. The protease activity is required for proteolytic activation of ATG8 family proteins: cleaves the C-terminal amino acid of ATG8 proteins to reveal a C-terminal glycine. Exposure of the glycine at the C-terminus is essential for ATG8 proteins conjugation to phosphatidylethanolamine (PE) and insertion to membranes, which is necessary for autophagy. In addition to the protease activity, also mediates delipidation of PE-conjugated ATG8 proteins. The polypeptide is Cysteine protease ATG4a (Arabidopsis thaliana (Mouse-ear cress)).